The chain runs to 335 residues: Anthranilate phosphoribosyltransferase (335 aa).

5-phospho-alpha-D-ribose 1-diphosphate contacts are provided by residues glycine 79, 82–83 (GD), threonine 87, 89–92 (NIST), 107–115 (KHGSRSVSS), and serine 119. Glycine 79 serves as a coordination point for anthranilate. Serine 91 provides a ligand contact to Mg(2+). An anthranilate-binding site is contributed by arginine 165. Mg(2+) contacts are provided by aspartate 223 and glutamate 224.

This sequence belongs to the anthranilate phosphoribosyltransferase family. Homodimer. Mg(2+) serves as cofactor.

It carries out the reaction N-(5-phospho-beta-D-ribosyl)anthranilate + diphosphate = 5-phospho-alpha-D-ribose 1-diphosphate + anthranilate. Its pathway is amino-acid biosynthesis; L-tryptophan biosynthesis; L-tryptophan from chorismate: step 2/5. Its function is as follows. Catalyzes the transfer of the phosphoribosyl group of 5-phosphorylribose-1-pyrophosphate (PRPP) to anthranilate to yield N-(5'-phosphoribosyl)-anthranilate (PRA). The sequence is that of Anthranilate phosphoribosyltransferase from Helicobacter pylori (strain Shi470).